Here is a 459-residue protein sequence, read N- to C-terminus: Cysteine--tRNA ligase (459 aa).

Cys28 contributes to the Zn(2+) binding site. A 'HIGH' region motif is present at residues 30-40; that stretch reads VTVYDLCHFGH. Zn(2+)-binding residues include Cys209, His234, and Glu238. The 'KMSKS' region signature appears at 266-270; the sequence is KMSKS. Lys269 contacts ATP.

This sequence belongs to the class-I aminoacyl-tRNA synthetase family. Monomer. Requires Zn(2+) as cofactor.

The protein resides in the cytoplasm. It catalyses the reaction tRNA(Cys) + L-cysteine + ATP = L-cysteinyl-tRNA(Cys) + AMP + diphosphate. This Glaesserella parasuis serovar 5 (strain SH0165) (Haemophilus parasuis) protein is Cysteine--tRNA ligase.